We begin with the raw amino-acid sequence, 494 residues long: V-type proton ATPase subunit B (494 aa).

Residue Arg384 coordinates ATP.

This sequence belongs to the ATPase alpha/beta chains family. In terms of assembly, V-ATPase is a heteromultimeric enzyme made up of two complexes: the ATP-hydrolytic V1 complex and the proton translocation V0 complex. The V1 complex consists of three catalytic AB heterodimers that form a heterohexamer, three peripheral stalks each consisting of EG heterodimers, one central rotor including subunits D and F, and the regulatory subunits C and H. The proton translocation complex V0 consists of the proton transport subunit a, a ring of proteolipid subunits c9c'', rotary subunit d, subunits e and f, and the accessory subunits VhaAC45 and ATP6AP2.

In terms of biological role, non-catalytic subunit of the V1 complex of vacuolar(H+)-ATPase (V-ATPase), a multisubunit enzyme composed of a peripheral complex (V1) that hydrolyzes ATP and a membrane integral complex (V0) that translocates protons. V-ATPase is responsible for acidifying and maintaining the pH of intracellular compartments and in some cell types, is targeted to the plasma membrane, where it is responsible for acidifying the extracellular environment. Essential for the proper assembly and activity of V-ATPase. This is V-type proton ATPase subunit B (VHA55) from Heliothis virescens (Tobacco budworm moth).